Here is a 626-residue protein sequence, read N- to C-terminus: Chaperone protein HtpG (626 aa).

Positions 1–338 are a; substrate-binding; it reads MTANKNQKKT…SNDLPLNVSR (338 aa). The segment at 339 to 553 is b; it reads EILQDHKLVY…SNEMSTQMAK (215 aa). The interval 554 to 626 is c; it reads LFSAAGQTVP…ARINDLLINN (73 aa).

It belongs to the heat shock protein 90 family. As to quaternary structure, homodimer.

It localises to the cytoplasm. Functionally, molecular chaperone. Has ATPase activity. This is Chaperone protein HtpG from Buchnera aphidicola subsp. Baizongia pistaciae (strain Bp).